A 447-amino-acid chain; its full sequence is Phosphoglucosamine mutase (447 aa).

Ser-102 functions as the Phosphoserine intermediate in the catalytic mechanism. Positions 102, 241, 243, and 245 each coordinate Mg(2+). Position 102 is a phosphoserine (Ser-102).

The protein belongs to the phosphohexose mutase family. It depends on Mg(2+) as a cofactor. Post-translationally, activated by phosphorylation.

The enzyme catalyses alpha-D-glucosamine 1-phosphate = D-glucosamine 6-phosphate. Its function is as follows. Catalyzes the conversion of glucosamine-6-phosphate to glucosamine-1-phosphate. The polypeptide is Phosphoglucosamine mutase (Symbiobacterium thermophilum (strain DSM 24528 / JCM 14929 / IAM 14863 / T)).